Reading from the N-terminus, the 203-residue chain is Large ribosomal subunit protein eL15 (203 aa).

The segment at 166 to 203 is disordered; that stretch reads ATGKKSRGINKGHRYNNTRSGRRHTWKRQNTQSYWRYR. A compositionally biased stretch (basic residues) spans 169–192; sequence KKSRGINKGHRYNNTRSGRRHTWK. Residues 193-203 are compositionally biased toward polar residues; the sequence is RQNTQSYWRYR.

The protein belongs to the eukaryotic ribosomal protein eL15 family.

The polypeptide is Large ribosomal subunit protein eL15 (rpl15) (Aspergillus niger).